The primary structure comprises 510 residues: Aromatic-L-amino-acid decarboxylase (510 aa).

A compositionally biased stretch (polar residues) spans 1 to 17 (MSHIPISNTIPTKQTDG). Positions 1–28 (MSHIPISNTIPTKQTDGNGKANISPDKL) are disordered. Thr117 serves as a coordination point for substrate. Positions 183, 184, 227, 305, and 334 each coordinate pyridoxal 5'-phosphate. His227 is a binding site for substrate. His227 is an active-site residue. Lys337 is modified (N6-(pyridoxal phosphate)lysine). Residues 358 to 384 (NAFNVDPLYLKHDMQGSAPDYRHWQIP) form a disordered region.

This sequence belongs to the group II decarboxylase family. In terms of assembly, homodimer. Pyridoxal 5'-phosphate serves as cofactor. As to expression, hypoderm isoform is expressed only in hypodermal epithelium and the CNS isoform only in central nervous system. Expressed in the adult head (at protein level).

The catalysed reaction is L-dopa + H(+) = dopamine + CO2. It catalyses the reaction 5-hydroxy-L-tryptophan + H(+) = serotonin + CO2. Its function is as follows. Catalyzes the decarboxylation of L-3,4-dihydroxyphenylalanine (L-DOPA) to dopamine and L-5-hydroxytryptophan (5-HTP) to serotonin. Catalyzes the formation of serotonin more efficiently than dopamine. Displays no activity to tyrosine. Variation in the synthesis of bioamines may be a factor contributing to natural variation in life span. The chain is Aromatic-L-amino-acid decarboxylase (Ddc) from Drosophila melanogaster (Fruit fly).